The sequence spans 161 residues: Small ribosomal subunit protein uS9 (161 aa).

Disordered stretches follow at residues 1–27 (MAQI…APKA) and 142–161 (KERK…FSKR).

This sequence belongs to the universal ribosomal protein uS9 family.

The chain is Small ribosomal subunit protein uS9 from Clavibacter michiganensis subsp. michiganensis (strain NCPPB 382).